We begin with the raw amino-acid sequence, 216 residues long: Imidazole glycerol phosphate synthase subunit HisH 1 (216 aa).

A Glutamine amidotransferase type-1 domain is found at 4–216 (CVLIVDAGLG…LQNFIALNPC (213 aa)). Cysteine 84 serves as the catalytic Nucleophile. Residues histidine 195 and glutamate 197 contribute to the active site.

As to quaternary structure, heterodimer of HisH and HisF.

It is found in the cytoplasm. It carries out the reaction 5-[(5-phospho-1-deoxy-D-ribulos-1-ylimino)methylamino]-1-(5-phospho-beta-D-ribosyl)imidazole-4-carboxamide + L-glutamine = D-erythro-1-(imidazol-4-yl)glycerol 3-phosphate + 5-amino-1-(5-phospho-beta-D-ribosyl)imidazole-4-carboxamide + L-glutamate + H(+). The catalysed reaction is L-glutamine + H2O = L-glutamate + NH4(+). The protein operates within amino-acid biosynthesis; L-histidine biosynthesis; L-histidine from 5-phospho-alpha-D-ribose 1-diphosphate: step 5/9. In terms of biological role, IGPS catalyzes the conversion of PRFAR and glutamine to IGP, AICAR and glutamate. The HisH subunit provides the glutamine amidotransferase activity that produces the ammonia necessary to HisF for the synthesis of IGP and AICAR. The protein is Imidazole glycerol phosphate synthase subunit HisH 1 (hisH1) of Prochlorococcus marinus (strain MIT 9313).